Reading from the N-terminus, the 141-residue chain is Large ribosomal subunit protein uL11 (141 aa).

The protein belongs to the universal ribosomal protein uL11 family. As to quaternary structure, part of the ribosomal stalk of the 50S ribosomal subunit. Interacts with L10 and the large rRNA to form the base of the stalk. L10 forms an elongated spine to which L12 dimers bind in a sequential fashion forming a multimeric L10(L12)X complex. In terms of processing, one or more lysine residues are methylated.

Forms part of the ribosomal stalk which helps the ribosome interact with GTP-bound translation factors. In Herpetosiphon aurantiacus (strain ATCC 23779 / DSM 785 / 114-95), this protein is Large ribosomal subunit protein uL11.